Consider the following 257-residue polypeptide: Zinc import ATP-binding protein ZnuC (257 aa).

Residues 6–221 (IRLEQVGVSF…PAFVELFGQN (216 aa)) enclose the ABC transporter domain. 38-45 (GPNGAGKT) contributes to the ATP binding site.

It belongs to the ABC transporter superfamily. Zinc importer (TC 3.A.1.15.5) family. As to quaternary structure, the complex is composed of two ATP-binding proteins (ZnuC), two transmembrane proteins (ZnuB) and a solute-binding protein (ZnuA).

The protein localises to the cell inner membrane. The catalysed reaction is Zn(2+)(out) + ATP(in) + H2O(in) = Zn(2+)(in) + ADP(in) + phosphate(in) + H(+)(in). In terms of biological role, part of the ABC transporter complex ZnuABC involved in zinc import. Responsible for energy coupling to the transport system. This chain is Zinc import ATP-binding protein ZnuC, found in Pseudomonas entomophila (strain L48).